We begin with the raw amino-acid sequence, 276 residues long: Kallikrein-10 (276 aa).

An N-terminal signal peptide occupies residues 1-30 (MRAPHLHLSAASGARALAKLLPLLMAQLWA). An N-linked (GlcNAc...) asparagine glycan is attached at asparagine 39. The 228-residue stretch at 47 to 274 (AYGSPCARGS…YMSWINKVIR (228 aa)) folds into the Peptidase S1 domain. 5 cysteine pairs are disulfide-bonded: cysteine 52–cysteine 162, cysteine 71–cysteine 87, cysteine 169–cysteine 235, cysteine 201–cysteine 215, and cysteine 225–cysteine 250. Catalysis depends on charge relay system residues histidine 86 and aspartate 137. Serine 229 acts as the Charge relay system in catalysis.

The protein belongs to the peptidase S1 family. Kallikrein subfamily. In terms of tissue distribution, expressed in breast, ovary and prostate.

The protein localises to the secreted. Functionally, has a tumor-suppressor role for NES1 in breast and prostate cancer. This chain is Kallikrein-10 (KLK10), found in Homo sapiens (Human).